Reading from the N-terminus, the 139-residue chain is Histone H2B (139 aa).

Over residues 1–10 (MAPKAAEKKP) the composition is skewed to basic and acidic residues. Positions 1–47 (MAPKAAEKKPSTGGKAPAGGKAPAEKKEAGKKTAASGEKKKRTKARK) are disordered. Lys-8 and Lys-9 each carry N6-acetyllysine; alternate. Glycyl lysine isopeptide (Lys-Gly) (interchain with G-Cter in SUMO); alternate cross-links involve residues Lys-8 and Lys-9. Residues 11–22 (STGGKAPAGGKA) show a composition bias toward low complexity. Position 15 is an N6-acetyllysine (Lys-15). At Lys-26 the chain carries N6-acetyllysine; alternate. Lys-26 is covalently cross-linked (Glycyl lysine isopeptide (Lys-Gly) (interchain with G-Cter in SUMO); alternate). Residue Lys-27 forms a Glycyl lysine isopeptide (Lys-Gly) (interchain with G-Cter in SUMO) linkage. Lys-133 participates in a covalent cross-link: Glycyl lysine isopeptide (Lys-Gly) (interchain with G-Cter in ubiquitin).

It belongs to the histone H2B family. In terms of assembly, the nucleosome is a histone octamer containing two molecules each of H2A, H2B, H3 and H4 assembled in one H3-H4 heterotetramer and two H2A-H2B heterodimers. The octamer wraps approximately 147 bp of DNA. Post-translationally, monoubiquitinated by the UBC2-BRE1 complex to form H2BK123ub1. H2BK123ub1 gives a specific tag for epigenetic transcriptional activation and is also prerequisite for H3K4me and H3K79me formation. H2BK123ub1 also modulates the formation of double-strand breaks during meiosis and is a prerequisite for DNA-damage checkpoint activation. In terms of processing, acetylated by GCN5 to form H2BK11ac and H2BK16ac. H2BK16ac can also be formed by ESA1. Acetylation of N-terminal lysines and particularly formation of H2BK11acK16ac has a positive effect on transcription. Sumoylation to form H2BK6su or H2BK7su, and probably also H2BK16su or H2BK17su, occurs preferentially near the telomeres and represses gene transcription.

It localises to the nucleus. Its subcellular location is the chromosome. In terms of biological role, core component of nucleosome. Nucleosomes wrap and compact DNA into chromatin, limiting DNA accessibility to the cellular machineries which require DNA as a template. Histones thereby play a central role in transcription regulation, DNA repair, DNA replication and chromosomal stability. DNA accessibility is regulated via a complex set of post-translational modifications of histones, also called histone code, and nucleosome remodeling. The polypeptide is Histone H2B (HTB1) (Coccidioides immitis (strain RS) (Valley fever fungus)).